The chain runs to 312 residues: tRNA dimethylallyltransferase (312 aa).

ATP is bound at residue 10-17; it reads GPTGVGKT. 12-17 lines the substrate pocket; sequence TGVGKT.

It belongs to the IPP transferase family. In terms of assembly, monomer. Mg(2+) is required as a cofactor.

The enzyme catalyses adenosine(37) in tRNA + dimethylallyl diphosphate = N(6)-dimethylallyladenosine(37) in tRNA + diphosphate. In terms of biological role, catalyzes the transfer of a dimethylallyl group onto the adenine at position 37 in tRNAs that read codons beginning with uridine, leading to the formation of N6-(dimethylallyl)adenosine (i(6)A). This chain is tRNA dimethylallyltransferase, found in Coprothermobacter proteolyticus (strain ATCC 35245 / DSM 5265 / OCM 4 / BT).